The primary structure comprises 136 residues: 1,4-dihydroxy-2-naphthoyl-CoA hydrolase (136 aa).

Residue aspartate 16 is part of the active site.

It belongs to the 4-hydroxybenzoyl-CoA thioesterase family. DHNA-CoA hydrolase subfamily.

It catalyses the reaction 1,4-dihydroxy-2-naphthoyl-CoA + H2O = 1,4-dihydroxy-2-naphthoate + CoA + H(+). Its pathway is cofactor biosynthesis; phylloquinone biosynthesis. It participates in quinol/quinone metabolism; 1,4-dihydroxy-2-naphthoate biosynthesis; 1,4-dihydroxy-2-naphthoate from chorismate: step 7/7. Catalyzes the hydrolysis of 1,4-dihydroxy-2-naphthoyl-CoA (DHNA-CoA) to 1,4-dihydroxy-2-naphthoate (DHNA), a reaction involved in phylloquinone (vitamin K1) biosynthesis. The polypeptide is 1,4-dihydroxy-2-naphthoyl-CoA hydrolase (Synechococcus sp. (strain ATCC 27144 / PCC 6301 / SAUG 1402/1) (Anacystis nidulans)).